The chain runs to 241 residues: MNKDTIFSAPIEKLGDFTFDESVAEVFPDMIQRSVPGYSNIITAIGMLAQRFVTEGSQVYDLGCSRGAGILSIRRNLQTNQVKIIGVDNSQPMVERCRSHINAYHSDVPVEILCDDIRHIEIKNASMVVLNFTLQFLPRADRLELLTKIYHGLNPNGILVLSEKFTFTNQAMSELLIDLHHTFKRANGYSELEVSQKRTALENVMLTDSIETHKDRLKQAGFSQIELWFQCFNFGSMIAVK.

Residues Y38, 63-65 (GCS), 88-89 (DN), 116-117 (DI), N131, and R198 contribute to the S-adenosyl-L-methionine site.

This sequence belongs to the class I-like SAM-binding methyltransferase superfamily. Cx-SAM synthase family. In terms of assembly, homodimer.

The catalysed reaction is prephenate + S-adenosyl-L-methionine = carboxy-S-adenosyl-L-methionine + 3-phenylpyruvate + H2O. In terms of biological role, catalyzes the conversion of S-adenosyl-L-methionine (SAM) to carboxy-S-adenosyl-L-methionine (Cx-SAM). This Actinobacillus pleuropneumoniae serotype 3 (strain JL03) protein is Carboxy-S-adenosyl-L-methionine synthase.